A 479-amino-acid chain; its full sequence is Odorant receptor coreceptor (479 aa).

Topologically, residues 1–43 (MHVQPTKYHGLVLDLMPNIRLMQGFGHFLFRYVSGPVLIRKLY) are cytoplasmic. Residues 44–64 (SWWNLIMILLQYFAIMGNLVM) traverse the membrane as a helical segment. The Extracellular segment spans residues 65–73 (NTGDVNELT). The helical transmembrane segment at 74 to 94 (ANTITTLFFTHSVTKFIYVAV) threads the bilayer. Residues 95 to 133 (NSEHFYRTLGIWNQPNSHSLFAESDARYHSIALAKMRKL) lie on the Cytoplasmic side of the membrane. A helical transmembrane segment spans residues 134–154 (LVMVMVTTVLSVVAWITITFF). The Extracellular segment spans residues 155 to 187 (GDSVKNVFDKETNETYTVEIPRLPIKALYPWDA). N167 is a glycosylation site (N-linked (GlcNAc...) asparagine). Residues 188–208 (MSGVPYFFSFVYQAYFLLFSM) form a helical membrane-spanning segment. Residues 209–344 (CQANLADVMF…VERHKHVVRL (136 aa)) lie on the Cytoplasmic side of the membrane. Residues 345–365 (VSAIGETYGAALLLHMLTSTI) traverse the membrane as a helical segment. Over 366-383 (KLTLLAYQATKIDALNVY) the chain is Extracellular. A helical membrane pass occupies residues 384 to 404 (GLTVIGYLVYALAQVFLFCIF). Residues 405–455 (GNRLIEESSSVMEAAYSCHWYDGSEEAKTFVQIVCQQCQKAMTISGAKFFT) are Cytoplasmic-facing. A helical transmembrane segment spans residues 456–476 (VSLDLFASVLGAVVTYFMVLV). The Extracellular portion of the chain corresponds to 477–479 (QLK).

The protein belongs to the insect chemoreceptor superfamily. Heteromeric odorant receptor channel (TC 1.A.69) family. Orco subfamily. Heterodimer with conventional odorant receptors (ORs). In terms of tissue distribution, expressed in female antenna, maxillary palp and proboscis. Not detected in male tissues.

The protein resides in the cell membrane. Its function is as follows. Odorant coreceptor which complexes with conventional odorant receptors (ORs) to form odorant-sensing units, providing sensitive and prolonged odorant signaling and calcium permeability. Orco is a universal and integral part of the functional odorant receptor, involved in the dendritic localization of other olfactory receptors. Required for detecting a host for blood feeding. Plays a key role in preferred attraction of females for humans over non-human hosts for blood feeding. This chain is Odorant receptor coreceptor, found in Aedes albopictus (Asian tiger mosquito).